A 360-amino-acid polypeptide reads, in one-letter code: Phospho-N-acetylmuramoyl-pentapeptide-transferase (360 aa).

10 consecutive transmembrane segments (helical) span residues Ala26 to Glu46, Met74 to Gly94, Tyr97 to Tyr117, Tyr134 to Asn154, Val168 to Ser188, Gly199 to Ser219, Ser236 to Phe256, Val263 to Leu283, Ile288 to Val308, and Val338 to Lys358.

The protein belongs to the glycosyltransferase 4 family. MraY subfamily. The cofactor is Mg(2+).

The protein resides in the cell inner membrane. The catalysed reaction is UDP-N-acetyl-alpha-D-muramoyl-L-alanyl-gamma-D-glutamyl-meso-2,6-diaminopimeloyl-D-alanyl-D-alanine + di-trans,octa-cis-undecaprenyl phosphate = di-trans,octa-cis-undecaprenyl diphospho-N-acetyl-alpha-D-muramoyl-L-alanyl-D-glutamyl-meso-2,6-diaminopimeloyl-D-alanyl-D-alanine + UMP. It functions in the pathway cell wall biogenesis; peptidoglycan biosynthesis. In terms of biological role, catalyzes the initial step of the lipid cycle reactions in the biosynthesis of the cell wall peptidoglycan: transfers peptidoglycan precursor phospho-MurNAc-pentapeptide from UDP-MurNAc-pentapeptide onto the lipid carrier undecaprenyl phosphate, yielding undecaprenyl-pyrophosphoryl-MurNAc-pentapeptide, known as lipid I. The chain is Phospho-N-acetylmuramoyl-pentapeptide-transferase from Shewanella baltica (strain OS185).